Here is a 204-residue protein sequence, read N- to C-terminus: Urease accessory protein UreE (204 aa).

Over residues 172-190 (HGHAHSHDHDHDHDHDHQH) the composition is skewed to basic and acidic residues. The tract at residues 172 to 204 (HGHAHSHDHDHDHDHDHQHGPGCTHGHHGHDHH) is disordered.

This sequence belongs to the UreE family.

The protein resides in the cytoplasm. Functionally, involved in urease metallocenter assembly. Binds nickel. Probably functions as a nickel donor during metallocenter assembly. This Burkholderia orbicola (strain AU 1054) protein is Urease accessory protein UreE.